We begin with the raw amino-acid sequence, 329 residues long: Ribosomal RNA small subunit methyltransferase C (329 aa).

This sequence belongs to the methyltransferase superfamily. RsmC family. Monomer.

It is found in the cytoplasm. It carries out the reaction guanosine(1207) in 16S rRNA + S-adenosyl-L-methionine = N(2)-methylguanosine(1207) in 16S rRNA + S-adenosyl-L-homocysteine + H(+). Functionally, specifically methylates the guanine in position 1207 of 16S rRNA in the 30S particle. The sequence is that of Ribosomal RNA small subunit methyltransferase C from Actinobacillus pleuropneumoniae serotype 3 (strain JL03).